The primary structure comprises 193 residues: Imidazoleglycerol-phosphate dehydratase (193 aa).

It belongs to the imidazoleglycerol-phosphate dehydratase family.

Its subcellular location is the cytoplasm. It catalyses the reaction D-erythro-1-(imidazol-4-yl)glycerol 3-phosphate = 3-(imidazol-4-yl)-2-oxopropyl phosphate + H2O. The protein operates within amino-acid biosynthesis; L-histidine biosynthesis; L-histidine from 5-phospho-alpha-D-ribose 1-diphosphate: step 6/9. The chain is Imidazoleglycerol-phosphate dehydratase from Saccharolobus islandicus (strain M.16.27) (Sulfolobus islandicus).